The primary structure comprises 1694 residues: MEGGSEKTTPEGCGGESKSKRKMKTAAQLEVLENTYSAEPYPSEAIRADLSVKLNLSDRQLQMWFCHRRLKERKSTTPSKRQRKELVTPTAMESWEPPVNAGDLVAGNELDSRRAARGSGGSGVTVVRRFNEPSSAEVRAIGYVEAQLGERLRDNGPVLGMEFDPLPPGAFGMPIEMPSHRKATRQAFETNIYVRSDVKPIKDHVRPIREYQFIPELPSSRTDHSERVSPSHHFGVPLDGSVMRVSAVSAGHRDDYKISPQIPNLNLATHQGKPGHVYSPNLVEYDSPYQKSYMDTAAQVHDDPFVKSEREVGNEDEDDDALQLERHRKNEEARIAREVEAHEKRIRRELEKQDMLRRKREEQIRKEMERQDRERRKEEERLLREKQREEERYLKEQMRELQRREKFLKKETIRAEKMRQKEEMRKEKEVARLKAANERAIARKIAKESMELIEDERLELMEVAALTKGLPSMLALDFETLQNLDEYRDKQAIFPPTSVKLKKPFAVKPWNGSDENVANLLMVWRFLITFADVLGLWPFTLDEFAQAFHDYDPRLMGEIHIVLLKTIIKDIEGVVRTLSTGVGANQNVAANPGGGHPHVVEGAYAWGFDIRSWRKNLNVFTWPEILRQLALSAGLGPQLKKMNIRTVSVHDDNEANNSENVIFNLRKGVAAENAFAKMQERGLSNPRRSRHRLTPGTVKFAAFHVLSLEGEKGLNILEVAEKIQKSGLRDLTTSRTPEASVAAALSRDTKLFERVAPSTYCVRASYRKDAGDAETIFAEARERIRAFKSGITDVEDVDDAERDEDSESDVGEDPEVDVNLKKEDPNPLKVENLIGVEPLLENGKLDTVPMKTELGLPLTPSLPEEMKDEKRDDTLADQSLEDAVANGEDSACFDESKLGEQWVQGLVEGDYSNLSSEERLNALVALIGIATEGNTIRIALEERLEVASALKKQMWGEVQLDKRWKEESLIRANYLSYPTAKPGLNIATPASGNQESSSADVTPISSQDPVSLPQIDVNNVIAGPSLQLQENVPGVENLQYQQQQGYTADRERLRAQLKAYVGYKAEELYVYRSLPLGQDRRRNRYWRFSASASRNDPGCGRIFVELQDGRWRLIDSEEAFDYLVKSLDVRGVRESHLHFMLLKIEASFKEALRRNVAANPGVCSISSSLDSDTAEISTTFKIELGDSNAVERCSVLQRFHSFEKWMWDNMLHPSALSAFKYGAKQSSPLFRICRICAELHFVGDICCPSCGQMHAGPDVGELCFAEQVAQLGDNLRRGDTGFILRSSILSPLRIRLLKVQLALVEASLPPEGLEAFWTENLRKSWGMKLLSSSSHEDLYQVLTTLEAALKRDFLSSNFETTSELLGLQEGALASDLTCGVNVLPWIPKTAGGVALRLFDFDSSIVYTPDQNNDPLKDKESEDFVGLETNILRNLHEKDVMETPVQVAAYKQEENWTDPGLGGVSSSGRGGRPPRGRGRPRARGNGKKPAVSVKPPRGAANSNGETMLRPRAQPRGGRKNGRRSGTKGRKRPTQGTLGICNEVGGGRRVKEVAVTAKTSLPDNDDDWIETPELQDDDGEASSSGRSFQYEDYDDDDVMAPIDDFDGGGESSKLVGRGEFSLHSDDEYEEEEEEEEDMNMKMDVNVVDDEDEDYINEDSYGRKQHGISISNDAATRKRFNKFEDPDLTSSSSSDFQ.

Positions 1-24 are disordered; that stretch reads MEGGSEKTTPEGCGGESKSKRKMK. A DNA-binding region (homeobox) is located at residues 17–76; it reads SKSKRKMKTAAQLEVLENTYSAEPYPSEAIRADLSVKLNLSDRQLQMWFCHRRLKERKST. The DDT domain occupies 514-573; it reads DENVANLLMVWRFLITFADVLGLWPFTLDEFAQAFHDYDPRLMGEIHIVLLKTIIKDIEG. The region spanning 696-765 is the HTH HARE-type domain; that stretch reads GTVKFAAFHV…APSTYCVRAS (70 aa). A compositionally biased stretch (acidic residues) spans 795-816; that stretch reads EDVDDAERDEDSESDVGEDPEV. 4 disordered regions span residues 795–822, 1450–1541, 1555–1639, and 1655–1674; these read EDVD…NLKK, KQEE…ICNE, AKTS…MNMK, and EDSY…AATR. Phosphoserine is present on residues S806 and S808. The span at 1459-1470 shows a compositional bias: gly residues; sequence GLGGVSSSGRGG. Basic residues-rich tracts occupy residues 1471–1485 and 1515–1531; these read RPPR…RGNG and GGRK…RKRP. 3 stretches are compositionally biased toward acidic residues: residues 1561-1578, 1589-1605, and 1624-1635; these read DNDD…DDGE, EDYD…DFDG, and DEYEEEEEEEED.

As to quaternary structure, interacts with CHR11. Interacts (via the DDT domain) with CHR11 (via C-terminus). As to expression, highly expressed in growing tissues such as inflorescence and flower meristems, young leaves and floral organs. Expressed in roots, rosette and cauline leaves, stems, flowers, inflorescences and siliques.

It localises to the nucleus. Its function is as follows. Transcriptional regulator required for the maintenance of the plant vegetative phase. In association with CHR11 or CHR17 may prevent the early activation of the vegetative-to-reproductive transition by regulating key genes that contribute to flower timing, such as FT, SEP1, SEP3, AGL8/FUL, SOC1 and FLC. Involved in the transcriptional regulation of seed-specific gene expression. In Arabidopsis thaliana (Mouse-ear cress), this protein is Homeobox-DDT domain protein RLT2.